We begin with the raw amino-acid sequence, 591 residues long: Frizzled and smoothened-like protein F (591 aa).

An N-terminal signal peptide occupies residues 1–17 (MKILIIFIIFIISYISG). Residues 18 to 244 (FEIPKGFGIG…KWDQLLTMSK (227 aa)) lie on the Extracellular side of the membrane. The 148-residue stretch at 30–177 (IPDAECLNYI…GTFAVPCSDP (148 aa)) folds into the FZ domain. Cystine bridges form between Cys-35–Cys-105, Cys-48–Cys-98, and Cys-123–Cys-174. Residues Asn-167, Asn-187, Asn-202, and Asn-230 are each glycosylated (N-linked (GlcNAc...) asparagine). Residues 245–265 (ILSTISFILSLYNVLTFGIIN) form a helical membrane-spanning segment. The Cytoplasmic portion of the chain corresponds to 266–275 (KKVSDPHKCT). A helical membrane pass occupies residues 276–296 (CFFSGSIALVNLCDIITYGIG). The Extracellular segment spans residues 297 to 321 (YEELLCPEPGRSAKQQLDPVCGLTG). Residues 322–342 (AFFHLGITYCVLWSMTMGLVL) traverse the membrane as a helical segment. At 343–353 (YCSVKRQKWFK) the chain is on the cytoplasmic side. The chain crosses the membrane as a helical span at residues 354-374 (FNYFLIGNTTFTITTVVIAAA). At 375–397 (TSKFEAGLGSIECWIRDRWYAIS) the chain is on the extracellular side. Residues 398–418 (LFWIPCGIALLIGSFCIIAVI) traverse the membrane as a helical segment. Topologically, residues 419-442 (HEVYKTSKKSISNRNDLLQRELKP) are cytoplasmic. The chain crosses the membrane as a helical span at residues 443 to 463 (LLIVIFISGSFLYLFIFFFDI). At 464 to 495 (ERKFGGYRSAVEDYVLCLLNGSQEECFTTGPS) the chain is on the extracellular side. Asn-483 carries an N-linked (GlcNAc...) asparagine glycan. The helical transmembrane segment at 496-516 (YVPYFLFYLVIRWFGIIFFLF) threads the bilayer. Residues 517 to 591 (YGTSNIARKI…AVELESIKIN (75 aa)) lie on the Cytoplasmic side of the membrane. A compositionally biased stretch (low complexity) spans 538-571 (SSISPKSTPKSSPKNSDSKINSNSTNNNNMILND). The segment at 538 to 573 (SSISPKSTPKSSPKNSDSKINSNSTNNNNMILNDNN) is disordered.

The protein belongs to the G-protein coupled receptor Fz/Smo family.

The protein localises to the membrane. This is Frizzled and smoothened-like protein F (fslF) from Dictyostelium discoideum (Social amoeba).